The following is a 332-amino-acid chain: Anthranilate phosphoribosyltransferase (332 aa).

5-phospho-alpha-D-ribose 1-diphosphate contacts are provided by residues Gly-79, Gly-82 to Asp-83, Ser-87, Asn-89 to Thr-92, Lys-107 to Ser-115, and Ser-119. Anthranilate is bound at residue Gly-79. Ser-91 is a binding site for Mg(2+). Anthranilate is bound at residue Asn-110. Arg-165 provides a ligand contact to anthranilate. Positions 223 and 224 each coordinate Mg(2+).

It belongs to the anthranilate phosphoribosyltransferase family. Homodimer. Mg(2+) is required as a cofactor.

The enzyme catalyses N-(5-phospho-beta-D-ribosyl)anthranilate + diphosphate = 5-phospho-alpha-D-ribose 1-diphosphate + anthranilate. Its pathway is amino-acid biosynthesis; L-tryptophan biosynthesis; L-tryptophan from chorismate: step 2/5. Functionally, catalyzes the transfer of the phosphoribosyl group of 5-phosphorylribose-1-pyrophosphate (PRPP) to anthranilate to yield N-(5'-phosphoribosyl)-anthranilate (PRA). This Photorhabdus laumondii subsp. laumondii (strain DSM 15139 / CIP 105565 / TT01) (Photorhabdus luminescens subsp. laumondii) protein is Anthranilate phosphoribosyltransferase.